We begin with the raw amino-acid sequence, 72 residues long: Heat-stable enterotoxin A3/A4 (72 aa).

The first 19 residues, 1–19 (MKKSILFIFLSVLSFSPFA), serve as a signal peptide directing secretion. Positions 20–53 (QDAKPVESSKEKITLESKKCNIAKKSNKSGPESM) are excised as a propeptide. 3 disulfide bridges follow: Cys-59–Cys-64, Cys-60–Cys-68, and Cys-63–Cys-71.

The protein belongs to the heat-stable enterotoxin family.

The protein localises to the secreted. Functionally, toxin which activates the particulate form of guanylate cyclase and increases cyclic GMP levels within the host intestinal epithelial cells. The chain is Heat-stable enterotoxin A3/A4 (sta3) from Escherichia coli.